The primary structure comprises 481 residues: Serralysin B (481 aa).

Residues 1–15 constitute a propeptide that is removed on maturation; that stretch reads MQQNEKASLNTSAAA. Residue histidine 189 participates in Zn(2+) binding. Residue glutamate 190 is part of the active site. Zn(2+) contacts are provided by histidine 193 and tyrosine 230. Ca(2+)-binding residues include arginine 267, glycine 269, threonine 271, aspartate 299, glycine 301, glycine 302, aspartate 304, threonine 341, glutamate 343, glycine 348, glycine 350, aspartate 352, asparagine 357, alanine 359, asparagine 361, glycine 365, glycine 366, alanine 367, glycine 368, aspartate 370, glycine 374, glycine 377, aspartate 379, glycine 383, glycine 384, alanine 385, glycine 386, aspartate 388, aspartate 397, aspartate 404, and aspartate 414. 3 Hemolysin-type calcium-binding repeats span residues 346–363, 364–381, and 382–399; these read IGGS…DNIL, QGGA…ADTL, and TGGA…QDST.

The protein belongs to the peptidase M10B family. Ca(2+) serves as cofactor. It depends on Zn(2+) as a cofactor.

It is found in the secreted. The enzyme catalyses Preferential cleavage of bonds with hydrophobic residues in P1'.. The chain is Serralysin B (prtB) from Dickeya chrysanthemi (Pectobacterium chrysanthemi).